Consider the following 324-residue polypeptide: Annexin A3 (324 aa).

Annexin repeat units lie at residues 19–90 (FNPS…ALIT), 91–162 (APAV…TLAD), 174–246 (HLAK…AVVR), and 250–321 (NTPA…KICG). K178 is subject to N6-acetyllysine. Position 268 is a phosphothreonine (T268).

Belongs to the annexin family.

Inhibitor of phospholipase A2, also possesses anti-coagulant properties. The chain is Annexin A3 (Anxa3) from Rattus norvegicus (Rat).